The primary structure comprises 373 residues: Secondary metabolism regulator laeA (373 aa).

Disordered stretches follow at residues 1-21 (MFLNGQGGQRPPTVASPPLNV) and 53-81 (AAERDPAAGRWHANGSPSINSTSSKNPDR). The span at 67–77 (GSPSINSTSSK) shows a compositional bias: polar residues.

Belongs to the methyltransferase superfamily. LaeA methyltransferase family. Component of the heterotrimeric velvet complex composed of laeA, veA and velB; VeA acting as a bridging protein between laeA and velB.

The protein resides in the nucleus. The enzyme catalyses L-methionyl-[protein] + S-adenosyl-L-methionine = S-methyl-L-methionyl-[protein] + S-adenosyl-L-homocysteine. Its function is as follows. Methyltransferase that performs automethylation. No other methyl-accepting substrate has been identified yet. Component of the velvet transcription factor complex that acts as a global regulator for secondary metabolite gene expression. Controls the expression of the cyclopiazonic acid (CPA) gene clusters. Regulates also pigmentation and conidial head morphology. This Aspergillus fumisynnematus protein is Secondary metabolism regulator laeA.